The sequence spans 359 residues: Histidinol-phosphate aminotransferase (359 aa).

Lysine 217 is modified (N6-(pyridoxal phosphate)lysine).

The protein belongs to the class-II pyridoxal-phosphate-dependent aminotransferase family. Histidinol-phosphate aminotransferase subfamily. Homodimer. Requires pyridoxal 5'-phosphate as cofactor.

It catalyses the reaction L-histidinol phosphate + 2-oxoglutarate = 3-(imidazol-4-yl)-2-oxopropyl phosphate + L-glutamate. The protein operates within amino-acid biosynthesis; L-histidine biosynthesis; L-histidine from 5-phospho-alpha-D-ribose 1-diphosphate: step 7/9. This chain is Histidinol-phosphate aminotransferase (hisC), found in Salmonella typhimurium (strain LT2 / SGSC1412 / ATCC 700720).